A 689-amino-acid chain; its full sequence is UvrABC system protein B (689 aa).

The tract at residues Met-1–Asp-26 is disordered. Positions Ala-40–Glu-422 constitute a Helicase ATP-binding domain. Gly-53–Thr-60 is a binding site for ATP. The Beta-hairpin motif lies at Tyr-106 to Ile-129. In terms of domain architecture, Helicase C-terminal spans Gln-443–Val-605. The region spanning Ala-632–Ala-667 is the UVR domain. Residues Phe-668–Trp-689 form a disordered region.

Belongs to the UvrB family. Forms a heterotetramer with UvrA during the search for lesions. Interacts with UvrC in an incision complex.

The protein localises to the cytoplasm. Its function is as follows. The UvrABC repair system catalyzes the recognition and processing of DNA lesions. A damage recognition complex composed of 2 UvrA and 2 UvrB subunits scans DNA for abnormalities. Upon binding of the UvrA(2)B(2) complex to a putative damaged site, the DNA wraps around one UvrB monomer. DNA wrap is dependent on ATP binding by UvrB and probably causes local melting of the DNA helix, facilitating insertion of UvrB beta-hairpin between the DNA strands. Then UvrB probes one DNA strand for the presence of a lesion. If a lesion is found the UvrA subunits dissociate and the UvrB-DNA preincision complex is formed. This complex is subsequently bound by UvrC and the second UvrB is released. If no lesion is found, the DNA wraps around the other UvrB subunit that will check the other stand for damage. This Halobacterium salinarum (strain ATCC 700922 / JCM 11081 / NRC-1) (Halobacterium halobium) protein is UvrABC system protein B.